A 333-amino-acid polypeptide reads, in one-letter code: D-fructose 1,6-bisphosphatase class 2/sedoheptulose 1,7-bisphosphatase (333 aa).

Residues Asp-33, Glu-57, Asp-85, and Glu-88 each coordinate Mn(2+). Substrate-binding positions include Glu-88–Thr-90, Tyr-119, Arg-164–Arg-166, and Asp-186–Asp-188. Glu-213 provides a ligand contact to Mn(2+).

It belongs to the FBPase class 2 family. Homotetramer. It depends on Mn(2+) as a cofactor.

It carries out the reaction beta-D-fructose 1,6-bisphosphate + H2O = beta-D-fructose 6-phosphate + phosphate. The catalysed reaction is D-sedoheptulose 1,7-bisphosphate + H2O = D-sedoheptulose 7-phosphate + phosphate. It functions in the pathway carbohydrate biosynthesis; Calvin cycle. Catalyzes the hydrolysis of fructose 1,6-bisphosphate (Fru 1,6-P2) and sedoheptulose 1,7-bisphosphate (Sed 1,7-P2) to fructose 6-phosphate and sedoheptulose 7-phosphate, respectively. The sequence is that of D-fructose 1,6-bisphosphatase class 2/sedoheptulose 1,7-bisphosphatase from Prochlorococcus marinus subsp. pastoris (strain CCMP1986 / NIES-2087 / MED4).